A 466-amino-acid polypeptide reads, in one-letter code: 3-isopropylmalate dehydratase large subunit (466 aa).

Positions 347, 407, and 410 each coordinate [4Fe-4S] cluster.

This sequence belongs to the aconitase/IPM isomerase family. LeuC type 1 subfamily. As to quaternary structure, heterodimer of LeuC and LeuD. It depends on [4Fe-4S] cluster as a cofactor.

It catalyses the reaction (2R,3S)-3-isopropylmalate = (2S)-2-isopropylmalate. Its pathway is amino-acid biosynthesis; L-leucine biosynthesis; L-leucine from 3-methyl-2-oxobutanoate: step 2/4. Catalyzes the isomerization between 2-isopropylmalate and 3-isopropylmalate, via the formation of 2-isopropylmaleate. In Escherichia coli (strain 55989 / EAEC), this protein is 3-isopropylmalate dehydratase large subunit.